A 458-amino-acid chain; its full sequence is Phosphoglucosamine mutase (458 aa).

S106 acts as the Phosphoserine intermediate in catalysis. Residues S106, D247, D249, and D251 each contribute to the Mg(2+) site. S106 bears the Phosphoserine mark.

Belongs to the phosphohexose mutase family. Mg(2+) serves as cofactor. Post-translationally, activated by phosphorylation.

It carries out the reaction alpha-D-glucosamine 1-phosphate = D-glucosamine 6-phosphate. Catalyzes the conversion of glucosamine-6-phosphate to glucosamine-1-phosphate. This is Phosphoglucosamine mutase from Chlamydia pneumoniae (Chlamydophila pneumoniae).